A 494-amino-acid chain; its full sequence is MFQVQKELASHEAVIVALFEEEETSSFVQELDKAFEGQLQVLLEEKELSTKKKAISKVHSLGKTEVKRYYFVGLGKKESYTTETLRSALGKTFKTLQAAKVQDAAILLDSFVTEKLDAIDVAHIAAEVQGLGTYELQTYKSDKKDRVELEKFTAITAEDAQEIEAALTVGYVHGRATNSARTLVNMPPNVLTATKLAEYAVELAEKYDMDYKVLEKEEMEELGMGALLAVNQGSVEPPKMIALIYKGKEEWTDVIGFVGKGITYDTGGYSLKPREGMVGMKGDMGGAAAVLGAMEIIGELRPEQNVIAVIPSTDNVVSGTAFKPDDVITSMSGKTIEVLNTDAEGRLALADGITYAKKLGANYLIDVATLTGGVIVALGNHTTGAMTNNEELFEQVLEASMETDESIWQLPIFDRDKERVRNSKFADLNNSPGREGHAVMAGTFLGEFAEDTPWVHLDIAGTSESSGAHDLGPAGATGAMVRTLATLVERFGEE.

The Mn(2+) site is built by Lys-260 and Asp-265. The active site involves Lys-272. Mn(2+)-binding residues include Asp-283, Asp-342, and Glu-344. The active site involves Arg-346.

It belongs to the peptidase M17 family. It depends on Mn(2+) as a cofactor.

It localises to the cytoplasm. The enzyme catalyses Release of an N-terminal amino acid, Xaa-|-Yaa-, in which Xaa is preferably Leu, but may be other amino acids including Pro although not Arg or Lys, and Yaa may be Pro. Amino acid amides and methyl esters are also readily hydrolyzed, but rates on arylamides are exceedingly low.. The catalysed reaction is Release of an N-terminal amino acid, preferentially leucine, but not glutamic or aspartic acids.. In terms of biological role, presumably involved in the processing and regular turnover of intracellular proteins. Catalyzes the removal of unsubstituted N-terminal amino acids from various peptides. The sequence is that of Probable cytosol aminopeptidase from Bacillus cereus (strain Q1).